Consider the following 408-residue polypeptide: Chaperone protein dnaJ 1, mitochondrial (408 aa).

A mitochondrion-targeting transit peptide spans 1–26 (MRRFNWVLRHVQARRTFDSAIGLRQG). Residues 48–113 (NYYDVLGVSP…ERREEYDKLQ (66 aa)) enclose the J domain. The segment at 173–247 (GCTKRLSFDA…CRGSGIVEGT (75 aa)) adopts a CR-type zinc-finger fold. Cys186, Cys189, Cys203, Cys206, Cys221, Cys224, Cys235, and Cys238 together coordinate Zn(2+). CXXCXGXG motif repeat units lie at residues 186–193 (CDSCDGLG), 203–210 (CPTCRGVG), 221–228 (CQTCKGTG), and 235–242 (CMSCRGSG).

The protein belongs to the DnaJ family. B/II subfamily. As to quaternary structure, homodimer. The cofactor is Zn(2+). As to expression, ubiquitous.

The protein resides in the mitochondrion. Its function is as follows. Plays a continuous role in plant development probably in the structural organization of compartments. This chain is Chaperone protein dnaJ 1, mitochondrial (ATJ1), found in Arabidopsis thaliana (Mouse-ear cress).